The sequence spans 218 residues: Sodium channel regulatory subunit beta-1 (218 aa).

An N-terminal signal peptide occupies residues 1 to 18 (MGRLLAFVVGAALVSSAW). The Extracellular segment spans residues 19–157 (GGCVEVDSET…DKANRDMASI (139 aa)). Intrachain disulfides connect Cys21/Cys43 and Cys40/Cys121. The region spanning 22 to 150 (VEVDSETEAV…KIHLEVVDKA (129 aa)) is the Ig-like C2-type domain. 4 N-linked (GlcNAc...) asparagine glycosylation sites follow: Asn93, Asn110, Asn114, and Asn135. The chain crosses the membrane as a helical span at residues 158 to 179 (VSEIMMYVLIVVLTIWLVAEMV). Residues 180–218 (YCYKKIAAATEAAAQENASEYLAITSESKENCTGVQVAE) lie on the Cytoplasmic side of the membrane.

Belongs to the sodium channel auxiliary subunit SCN1B (TC 8.A.17) family. A voltage-gated sodium (Nav) channel consists of an ion-conducting pore-forming alpha subunit functional on its own that is regulated by one or more beta subunits. Interacts with SCN1A; regulatory subunit of SCN1A/Nav1.1. Interacts with SCN3A; regulatory subunit of SCN3A/Nav1.3. Interacts with SCN4A; regulatory subunit of SCN4A/Nav1.4. Interacts with SCN5A; regulatory subunit of SCN5A/Nav1.5. Interacts with SCN8A; regulatory subunit of SCN8A/Nav1.6. Interacts with SCN9A; regulatory subunit of SCN9A/Nav1.7. Interacts with SCN10A; regulatory subunit of SCN10A/Nav1.8. Interacts with NFASC. Interacts with TMEM65.

It localises to the cell membrane. The protein resides in the perikaryon. Its subcellular location is the cell projection. It is found in the axon. Regulatory subunit of multiple voltage-gated sodium (Nav) channels directly mediating the depolarization of excitable membranes. Navs, also called VGSCs (voltage-gated sodium channels) or VDSCs (voltage-dependent sodium channels), operate by switching between closed and open conformations depending on the voltage difference across the membrane. In the open conformation they allow Na(+) ions to selectively pass through the pore, along their electrochemical gradient. The influx of Na+ ions provokes membrane depolarization, initiating the propagation of electrical signals throughout cells and tissues. The accessory beta subunits participate in localization and functional modulation of the Nav channels. Modulates the activity of SCN1A/Nav1.1, SCN2A/Nav1.2, SCN3A/Nav1.3, SCN4A/Nav1.4, SCN5A/Nav1.5, SCN8A/Nav1.6, SCN9A/Nav1.7 and SCN10A/Nav1.8. The polypeptide is Sodium channel regulatory subunit beta-1 (Oryctolagus cuniculus (Rabbit)).